Here is a 734-residue protein sequence, read N- to C-terminus: Monosaccharide-sensing protein 1 (734 aa).

A run of 6 helical transmembrane segments spans residues 6 to 26, 44 to 64, 79 to 99, 102 to 122, 133 to 153, and 163 to 183; these read LVAL…ATIA, GLVV…SGPI, VMYF…VLCF, LLNG…ISET, TLPQ…VFTM, and AMLG…VFYL. The disordered stretch occupies residues 351–403; the sequence is YNKDNDDYATDDGAGDDDDSDNDLRSPLMSRQTTSMDKDMIPHPTSGSTLSMR. Over residues 357-371 the composition is skewed to acidic residues; it reads DYATDDGAGDDDDSD. A phosphoserine mark is found at Ser-446 and Ser-480. Transmembrane regions (helical) follow at residues 510–530, 556–576, 588–608, 621–641, 653–673, and 680–700; these read ALVV…NGVL, ASFL…VVAM, LLWT…SELI, GCVV…PNIL, LCIA…TYSL, and IGLV…WIFV.

It belongs to the major facilitator superfamily. Sugar transporter (TC 2.A.1.1) family. As to quaternary structure, binds to VIK at the tonoplast. In terms of processing, phosphorylated by VIK; this activation promotes carrier activity. As to expression, mostly expressed in juvenile and adult leaves, to a lower extent, in flower tissues, and, at low levels, in roots and stems.

The protein resides in the vacuole membrane. It catalyses the reaction D-glucose(out) + H(+)(in) = D-glucose(in) + H(+)(out). The catalysed reaction is sucrose(out) + H(+)(in) = sucrose(in) + H(+)(out). With respect to regulation, enhanced activation by VIK-mediated phosphorylation promoting carrier activity and consequently vacuolar sugar accumulation. In terms of biological role, sugar proton-coupled antiporter which contributes to vacuolar sugar import (e.g. monosaccharides including glucose, sucrose and fructose), particularly during stress responses (e.g. in response to cold). Required for cytosolic glucose homeostasis. In Arabidopsis thaliana (Mouse-ear cress), this protein is Monosaccharide-sensing protein 1.